The chain runs to 451 residues: Phosphoglucosamine mutase (451 aa).

The active-site Phosphoserine intermediate is Ser102. Mg(2+) is bound by residues Ser102, Asp244, Asp246, and Asp248. Ser102 bears the Phosphoserine mark.

Belongs to the phosphohexose mutase family. Requires Mg(2+) as cofactor. In terms of processing, activated by phosphorylation.

It carries out the reaction alpha-D-glucosamine 1-phosphate = D-glucosamine 6-phosphate. Its function is as follows. Catalyzes the conversion of glucosamine-6-phosphate to glucosamine-1-phosphate. The sequence is that of Phosphoglucosamine mutase from Lawsonia intracellularis (strain PHE/MN1-00).